We begin with the raw amino-acid sequence, 2419 residues long: Telomere-associated protein RIF1 (2419 aa).

2 disordered regions span residues 1 to 24 and 373 to 408; these read MTAP…VPPG and SIPS…SPRG. Residues 373 to 385 are compositionally biased toward polar residues; that stretch reads SIPSPQGNSSRGS. A phosphoserine mark is found at serine 385, serine 391, serine 779, serine 976, and serine 1005. The residue at position 1044 (threonine 1044) is a Phosphothreonine. Residues 1184 to 1198 show a composition bias toward low complexity; that stretch reads SSSTETSVVSSSSVS. 2 disordered regions span residues 1184–1594 and 1613–1637; these read SSST…QAVP and RVIL…EKSK. Composition is skewed to polar residues over residues 1199-1217 and 1228-1255; these read NATF…QTFI and RPFS…TNTD. A Phosphothreonine modification is found at threonine 1215. Serine 1231 and serine 1233 each carry phosphoserine. Residues 1263–1272 show a composition bias toward basic and acidic residues; sequence REVTNSKSDS. Over residues 1289-1302 the composition is skewed to polar residues; it reads AEQSVTKKSKPSLT. The segment covering 1323 to 1345 has biased composition (basic and acidic residues); it reads HVSENDDHPSEATLEHKDGDPKP. Phosphoserine is present on residues serine 1407, serine 1439, serine 1457, and serine 1498. Residues 1416–1455 are compositionally biased toward basic and acidic residues; the sequence is SQERESGQQKKERRKEEEKIISKSPLRIKDDKLPTQKLTD. Over residues 1457 to 1467 the composition is skewed to polar residues; the sequence is SPIQENLTEKG. Threonine 1504 is subject to Phosphothreonine. The segment covering 1507-1516 has biased composition (basic and acidic residues); it reads NLDKSSEKPL. Residues 1525-1537 are compositionally biased toward polar residues; it reads RRASQGLISAVEN. Residues serine 1528, serine 1538, serine 1540, serine 1542, and serine 1550 each carry the phosphoserine modification. Over residues 1551-1560 the composition is skewed to basic residues; it reads RKKRSGKWKN. 2 positions are modified to phosphoserine: serine 1562 and serine 1565. The span at 1572–1581 shows a compositional bias: basic and acidic residues; it reads EEKKAEEEVM. Serine 1680 and serine 1683 each carry phosphoserine. Threonine 1780 carries the post-translational modification Phosphothreonine. Residue serine 1784 is modified to Phosphoserine. Residues 1812–1836 are disordered; the sequence is ASEAVSEIQGPCSENHSPAEDPGLS. Position 1842 is a phosphoserine (serine 1842). The segment at 1882–2419 is interaction with condensed chromosomes in telophase; the sequence is DAFVAADSEK…RWRSPAHENS (538 aa). Disordered regions lie at residues 1890–1914 and 1929–1983; these read EKST…ECEA and FNSG…AQMS. Serine 1931, serine 2094, serine 2109, serine 2121, serine 2125, serine 2144, serine 2153, serine 2208, serine 2287, serine 2341, serine 2413, and serine 2419 each carry phosphoserine. Positions 2119-2394 are interaction with ERCC6; the sequence is VWSPLASPST…TGSQLFEMHE (276 aa). Residues 2182–2212 form a disordered region; it reads SPIIKSVKTSPTSHSKHNTTSAKGFLSPGSQ. Residues 2189–2212 show a composition bias toward polar residues; that stretch reads KTSPTSHSKHNTTSAKGFLSPGSQ.

The protein belongs to the RIF1 family. As to quaternary structure, interacts with TP53BP1 (when phosphorylated by ATM). May interact with TRF2. Interacts with SHLD2. Interacts with ERCC6 (via WHD region). Interacts with ASTE1. In terms of tissue distribution, expressed in Sertoli cells, prospermatagonia, early primary spermatocytes, and in oocytes at all stages of their growth. Expressed in embryonic stem (ES) and embryonic germ (EG) cells: expression is lost upon differentiation.

It localises to the nucleus. The protein resides in the chromosome. It is found in the telomere. The protein localises to the cytoplasm. Its subcellular location is the cytoskeleton. It localises to the spindle. Its function is as follows. Key regulator of TP53BP1 that plays a key role in the repair of double-strand DNA breaks (DSBs) in response to DNA damage: acts by promoting non-homologous end joining (NHEJ)-mediated repair of DSBs. In response to DNA damage, interacts with ATM-phosphorylated TP53BP1. Interaction with TP53BP1 leads to dissociate the interaction between NUDT16L1/TIRR and TP53BP1, thereby unmasking the tandem Tudor-like domain of TP53BP1 and allowing recruitment to DNA DSBs. Once recruited to DSBs, RIF1 and TP53BP1 act by promoting NHEJ-mediated repair of DSBs. In the same time, RIF1 and TP53BP1 specifically counteract the function of BRCA1 by blocking DSBs resection via homologous recombination (HR) during G1 phase. Also required for immunoglobulin class-switch recombination (CSR) during antibody genesis, a process that involves the generation of DNA DSBs. Promotes NHEJ of dysfunctional telomeres. This Mus musculus (Mouse) protein is Telomere-associated protein RIF1.